We begin with the raw amino-acid sequence, 239 residues long: Ribonuclease HII (239 aa).

Residues 30 to 221 (GPVAGVDEVG…VRRVATRSNG (192 aa)) enclose the RNase H type-2 domain. Asp-36, Glu-37, and Asp-130 together coordinate a divalent metal cation. The segment at 219-239 (SNGAAAAEREADPPQERDGTG) is disordered. Residues 225–239 (AEREADPPQERDGTG) are compositionally biased toward basic and acidic residues.

This sequence belongs to the RNase HII family. Mn(2+) is required as a cofactor. Requires Mg(2+) as cofactor.

The protein resides in the cytoplasm. It catalyses the reaction Endonucleolytic cleavage to 5'-phosphomonoester.. Endonuclease that specifically degrades the RNA of RNA-DNA hybrids. The protein is Ribonuclease HII of Mycobacterium marinum (strain ATCC BAA-535 / M).